A 420-amino-acid chain; its full sequence is ATP-dependent Clp protease ATP-binding subunit ClpX (420 aa).

Residues 3 to 57 (KKTPGTNGKQKLFCSFCGKEQDAVKRLVAGPGVYICDECISLCNEIIAEDHEHSH) form the ClpX-type ZB domain. Cysteine 16, cysteine 19, cysteine 38, and cysteine 41 together coordinate Zn(2+). 122-129 (PTGSGKTL) is a binding site for ATP.

Belongs to the ClpX chaperone family. In terms of assembly, component of the ClpX-ClpP complex. Forms a hexameric ring that, in the presence of ATP, binds to fourteen ClpP subunits assembled into a disk-like structure with a central cavity, resembling the structure of eukaryotic proteasomes.

ATP-dependent specificity component of the Clp protease. It directs the protease to specific substrates. Can perform chaperone functions in the absence of ClpP. The protein is ATP-dependent Clp protease ATP-binding subunit ClpX of Leptospira borgpetersenii serovar Hardjo-bovis (strain L550).